Consider the following 785-residue polypeptide: Phenylalanine--tRNA ligase beta subunit (785 aa).

Residues 39–147 (FPIPRGVVFA…DALPPGTPLS (109 aa)) enclose the tRNA-binding domain. In terms of domain architecture, B5 spans 399–474 (KPPEAIPFRP…RIQGYETIPL (76 aa)). Residues D452, D458, E461, and E462 each coordinate Mg(2+). One can recognise an FDX-ACB domain in the interval 688–780 (SRHPAAFRDL…ALRARGFGLR (93 aa)).

Belongs to the phenylalanyl-tRNA synthetase beta subunit family. Type 1 subfamily. In terms of assembly, tetramer of two alpha and two beta subunits. It depends on Mg(2+) as a cofactor.

It is found in the cytoplasm. The enzyme catalyses tRNA(Phe) + L-phenylalanine + ATP = L-phenylalanyl-tRNA(Phe) + AMP + diphosphate + H(+). The sequence is that of Phenylalanine--tRNA ligase beta subunit (pheT) from Thermus thermophilus (strain ATCC 27634 / DSM 579 / HB8).